The primary structure comprises 574 residues: Sulfite reductase [NADPH] hemoprotein beta-component (574 aa).

The [4Fe-4S] cluster site is built by Cys-439, Cys-445, Cys-484, and Cys-488. Cys-488 contributes to the siroheme binding site.

The protein belongs to the nitrite and sulfite reductase 4Fe-4S domain family. As to quaternary structure, alpha(8)-beta(8). The alpha component is a flavoprotein, the beta component is a hemoprotein. Requires siroheme as cofactor. It depends on [4Fe-4S] cluster as a cofactor.

It catalyses the reaction hydrogen sulfide + 3 NADP(+) + 3 H2O = sulfite + 3 NADPH + 4 H(+). It functions in the pathway sulfur metabolism; hydrogen sulfide biosynthesis; hydrogen sulfide from sulfite (NADPH route): step 1/1. In terms of biological role, component of the sulfite reductase complex that catalyzes the 6-electron reduction of sulfite to sulfide. This is one of several activities required for the biosynthesis of L-cysteine from sulfate. This chain is Sulfite reductase [NADPH] hemoprotein beta-component, found in Paenibacillus sp. (strain JDR-2).